A 458-amino-acid chain; its full sequence is N-acetylgalactosamine kinase (458 aa).

Alpha-D-galactose-binding residues include R43, E49, H50, and D52. ATP is bound by residues G143, S145, and S146. Residue D190 participates in alpha-D-galactose binding. D190 acts as the Proton acceptor in catalysis. The ATP site is built by N233 and K234.

This sequence belongs to the GHMP kinase family. GalK subfamily. As to quaternary structure, monomer.

The catalysed reaction is N-acetyl-alpha-D-galactosamine + ATP = N-acetyl-alpha-D-galactosamine 1-phosphate + ADP + H(+). Acts on GalNAc. Also acts as a galactokinase when galactose is present at high concentrations. May be involved in a salvage pathway for the reutilization of free GalNAc derived from the degradation of complex carbohydrates. This is N-acetylgalactosamine kinase (GALK2) from Homo sapiens (Human).